Here is a 181-residue protein sequence, read N- to C-terminus: MKQLLDFLPLIIFFAVYKFFDIYIASGALIAATALQLVVTYALYKKLEKMHLITFAMVTVFGTLTLVFHDDAFIKWKVTIIYALFALALGVSQLLNKSILKSMLGKEMKVADNIWAHVTWYWVSFFAICGLVNIYVAFRLPLETWVNFKVFGLTALTLINTVITVFYLYKHLPEDQRKELK.

5 helical membrane passes run 10 to 30 (LIIF…GALI), 50 to 70 (MHLI…VFHD), 72 to 92 (AFIK…LGVS), 118 to 138 (VTWY…YVAF), and 148 to 168 (FKVF…VFYL).

The protein belongs to the YciB family.

It localises to the cell inner membrane. Functionally, plays a role in cell envelope biogenesis, maintenance of cell envelope integrity and membrane homeostasis. The sequence is that of Inner membrane-spanning protein YciB from Shewanella sp. (strain MR-7).